The primary structure comprises 499 residues: MNGAEELPEMYDYDLIIIGGGSGGLAAAKEAARFNKRVMVLDFVTPTPLGTRWGLGGTCVNVSCIPKKLMHQAALLGQALRDSRNYGWNVEETIKHDWERMTEAVQNHIGSLNWGYRVALREKKVTYENAYGQFVGPHRIKATNNKGKEKIYSAEKFLIATGERPRYLGIPGDKEYCISSDDLFSLPYCPGKTLVVGASYVALECAGFLAGIGLDVTVMVRSILLRGFDQDMANKIGEHMEEHGIKFIRQFVPIKVEQIEAGTPGRLRVVAQSTNSEEIIEGEYNTVMLAIGRDACTRKIGLETVGVKINEKTGKIPVTDEEQTNVPYIYAIGDILEDKVELTPVAIQAGRLLAQRLYAGSTVKCDYENVPTTVFTPLEYGACGLSEEKAVEKFGEENIEVYHSYFWPLEWTIPSRDNNKCYAKIICNTKDNERVVGFHVLGPNAGEVTQGFAAALKCGLTKKQLDSTIGIHPVCAEVFTTLSVTKRSGASILQAGCUG.

Residues 22–23, 42–43, 58–59, and 63–67 contribute to the FAD site; these read SG, DF, TC, and SCIPK. Residues Cys-59 and Cys-64 are joined by a disulfide bond. Lys-68 is modified (N6-succinyllysine). Phosphotyrosine is present on Tyr-131. Residues 131–132 and Thr-161 each bind FAD; that span reads YG. Residues Arg-166, 198–204, 221–222, Arg-226, 226–228, 292–293, and Lys-315 each bind NADP(+); these read ASYVALE, RS, RGF, and GR. Position 200 (Tyr-200) interacts with FAD. FAD contacts are provided by residues Asp-334, 341–343, and His-472; that span reads ELT. An NADP(+)-binding site is contributed by Glu-341. His-472 (proton acceptor) is an active-site residue. Residues 497–498 constitute a cross-link (cysteinyl-selenocysteine (Cys-Sec)); sequence CU. Position 498 (Sec-498) is a non-standard amino acid, selenocysteine.

The protein belongs to the class-I pyridine nucleotide-disulfide oxidoreductase family. In terms of assembly, homodimer. It depends on FAD as a cofactor. Post-translationally, ISGylated.

The protein resides in the cytoplasm. The enzyme catalyses [thioredoxin]-dithiol + NADP(+) = [thioredoxin]-disulfide + NADPH + H(+). It catalyses the reaction H2O2 + NADPH + H(+) = NADP(+) + 2 H2O. Functionally, reduces disulfideprotein thioredoxin (Trx) to its dithiol-containing form. Homodimeric flavoprotein involved in the regulation of cellular redox reactions, growth and differentiation. Contains a selenocysteine residue at the C-terminal active site that is essential for catalysis. Also has reductase activity on hydrogen peroxide (H2O2). This chain is Thioredoxin reductase 1, cytoplasmic (TXNRD1), found in Sus scrofa (Pig).